A 502-amino-acid polypeptide reads, in one-letter code: Maturase K (502 aa).

This sequence belongs to the intron maturase 2 family. MatK subfamily.

Its subcellular location is the plastid. It localises to the chloroplast. Usually encoded in the trnK tRNA gene intron. Probably assists in splicing its own and other chloroplast group II introns. This Brassica oleracea (Wild cabbage) protein is Maturase K.